The primary structure comprises 287 residues: Nematocyst expressed protein 6 (287 aa).

The N-terminal stretch at 1 to 20 (MKGFIFAGVLVSALICLAEG) is a signal peptide. Positions 53-249 (RAALRDRYLW…RQTNLMYKCN (197 aa)) constitute a Peptidase M12A domain. Disulfide bonds link C95-C248 and C116-C139. H146 serves as a coordination point for Zn(2+). Residue E147 is part of the active site. Zn(2+) contacts are provided by H150 and H156. The interval 249–287 (NAQGDSELQPVNDEDEDKDGGDSKKKPDPKGPKPGEIEE) is disordered. The segment covering 268 to 287 (GGDSKKKPDPKGPKPGEIEE) has biased composition (basic and acidic residues).

Zn(2+) is required as a cofactor. As to expression, nematocyte and pharyngeal gland.

It is found in the secreted. Its subcellular location is the nematocyst. Metalloprotease. This is Nematocyst expressed protein 6 from Nematostella vectensis (Starlet sea anemone).